The sequence spans 669 residues: DNA ligase (669 aa).

NAD(+) is bound by residues 34–38 (DAEYD), 83–84 (SL), and Glu114. Lys116 acts as the N6-AMP-lysine intermediate in catalysis. The NAD(+) site is built by Arg137, Glu171, Lys287, and Lys311. Residues Cys405, Cys408, Cys423, and Cys428 each contribute to the Zn(2+) site. The region spanning 591–669 (NVESYFAGKT…EERFLQELNK (79 aa)) is the BRCT domain.

It belongs to the NAD-dependent DNA ligase family. LigA subfamily. Mg(2+) is required as a cofactor. The cofactor is Mn(2+).

The enzyme catalyses NAD(+) + (deoxyribonucleotide)n-3'-hydroxyl + 5'-phospho-(deoxyribonucleotide)m = (deoxyribonucleotide)n+m + AMP + beta-nicotinamide D-nucleotide.. Functionally, DNA ligase that catalyzes the formation of phosphodiester linkages between 5'-phosphoryl and 3'-hydroxyl groups in double-stranded DNA using NAD as a coenzyme and as the energy source for the reaction. It is essential for DNA replication and repair of damaged DNA. The sequence is that of DNA ligase from Bacillus cereus (strain AH820).